The primary structure comprises 445 residues: Phosphoglucosamine mutase (445 aa).

Residue Ser102 is the Phosphoserine intermediate of the active site. 4 residues coordinate Mg(2+): Ser102, Asp241, Asp243, and Asp245. Ser102 is modified (phosphoserine).

The protein belongs to the phosphohexose mutase family. The cofactor is Mg(2+). In terms of processing, activated by phosphorylation.

It carries out the reaction alpha-D-glucosamine 1-phosphate = D-glucosamine 6-phosphate. In terms of biological role, catalyzes the conversion of glucosamine-6-phosphate to glucosamine-1-phosphate. This Pectobacterium atrosepticum (strain SCRI 1043 / ATCC BAA-672) (Erwinia carotovora subsp. atroseptica) protein is Phosphoglucosamine mutase.